Consider the following 203-residue polypeptide: bMERB domain-containing protein 1 (203 aa).

The bMERB domain occupies 3–149 (LKQSLSVHLE…EQEEDKEMAD (147 aa)). Residues 160 to 186 (KVTKSSASSRAEKKAEPPPSKPTVAKT) are disordered.

The protein is bMERB domain-containing protein 1 (Bmerb1) of Rattus norvegicus (Rat).